Here is a 741-residue protein sequence, read N- to C-terminus: MAAKDDLILTIDSDGDEIVYSEESEAEVEISVKKVKNKKNKKSKAQPQQKEEDEEKNEDINPNFIFSLDGIETTSKFDGWDFSVDRNANEVANKEVDLDGILRRKGGLVSLAGSDAQKEEEVEDEEEEENDEDIQNEDEDEGEEELALDGFGMGAEEKVIDEEDEEDEEDENDKSDGEDDKDTEVEVSEEGEEENDEDTAEAMAEFYADEKETKSAKSQVHTTFQTLQLSRPVLKGLSQLGYTKPSPIQSASIPIALLGRDIVAGAVTGSGKTAAYMIPIIERLLYKPSKVASTRVIVLTPTRELAIQVGDVGKKIGQFVNNLNFGLAVGGLNLRQQEQQLKSRPDVVIATPGRLIDHIRNSPSFSIDSLEVLVIDEADRMLDEGFQVELTEILSLIPKNKRQTLLFSATMNTKIQDLIQLSLQRPVRIMIDPPKTAATKLTQEFVRIRKRDHLKPALLFQLLKKLDPAQQSRIVVFVSRKESAHKLRIVLGLLGMKVSELHGSLTQEQRLNNVNDFKKLIVPVLICTDLAARGLDIPKIEIVINYDMPKSHEVYLHRVGRTARAGRDGTSISFVGESTSDRNIVKDAIKSLEGGEVKGKAVSRNIDWVDVEQLNKIVESKQEIIEEVLDEEKQAKEILQAEMQLAKASNMMKHEKEIQSRPKRTWFESEKDKKKHQTEVMQQLTKHGKKVNSKKRKAIEVKKDDGGRSYKKTKVDRITDQKRNPKAKIGNGSSKGGKRRK.

The span at valine 35–lysine 44 shows a compositional bias: basic residues. 2 disordered regions span residues valine 35–asparagine 63 and glycine 106–alanine 200. Acidic residues-rich tracts occupy residues lysine 118 to alanine 147 and valine 159 to alanine 200. A Q motif motif is present at residues threonine 222–serine 250. The Helicase ATP-binding domain maps to isoleucine 253 to isoleucine 429. An ATP-binding site is contributed by alanine 266–threonine 273. Positions aspartate 376 to aspartate 379 match the DEAD box motif. The Helicase C-terminal domain occupies leucine 458–serine 603. Residues aspartate 610–glutamate 657 adopt a coiled-coil conformation. The segment at asparagine 650–lysine 741 is disordered. The span at methionine 652–aspartate 672 shows a compositional bias: basic and acidic residues. The span at lysine 686–lysine 697 shows a compositional bias: basic residues. A compositionally biased stretch (basic and acidic residues) spans alanine 698–arginine 723.

The protein belongs to the DEAD box helicase family. DDX27/DRS1 subfamily. Associates with pre-ribosomal particles.

It is found in the nucleus. Its subcellular location is the nucleolus. The catalysed reaction is ATP + H2O = ADP + phosphate + H(+). In terms of biological role, ATP-binding RNA helicase involved in ribosome assembly. The sequence is that of ATP-dependent RNA helicase DRS1 (DRS1) from Scheffersomyces stipitis (strain ATCC 58785 / CBS 6054 / NBRC 10063 / NRRL Y-11545) (Yeast).